The primary structure comprises 61 residues: Metallothionein-1E (61 aa).

Met1 carries the post-translational modification N-acetylmethionine. Positions 1–29 are beta; it reads MDPNCSCPTGGSCSCAGSCTCKACRCTSC. Cys5, Cys7, Cys13, Cys15, Cys19, Cys21, Cys24, Cys26, Cys29, Cys33, Cys34, Cys36, Cys37, Cys41, Cys44, Cys48, Cys50, Cys57, Cys59, and Cys60 together coordinate a divalent metal cation. The alpha stretch occupies residues 30–61; that stretch reads KKSCCSCCPVGCAKCAQGCICKGASDKCSCCA.

It belongs to the metallothionein superfamily. Type 1 family. In terms of assembly, monomer.

Functionally, metallothioneins have a high content of cysteine residues that bind various heavy metals; these proteins are transcriptionally regulated by both heavy metals and glucocorticoids. This chain is Metallothionein-1E (MT1E), found in Sus scrofa (Pig).